A 202-amino-acid polypeptide reads, in one-letter code: Mitochondrial import receptor subunit TOM20-3 (202 aa).

Position 1 is an N-acetylmethionine (M1). Topologically, residues 1-174 (MDTETEFDRI…NKKSSDAKYD (174 aa)) are cytoplasmic. 2 TPR repeats span residues 38-74 (GGVL…DPKK) and 86-119 (TSFA…QPDN). The disordered stretch occupies residues 146–166 (SQPMGRVEAPAPPSSKAVKNK). Residues 175 to 192 (AMGWVILAIGVVAWISFA) form a helical membrane-spanning segment. The Mitochondrial intermembrane segment spans residues 193–202 (KANVPVSPPR).

This sequence belongs to the Tom20 family. In terms of assembly, forms part of the preprotein translocase complex of the outer mitochondrial membrane (TOM complex) which consists of at least 6 different proteins (TOM5, TOM6, TOM7, TOM20, TOM22/TOM9 and TOM40). Component of a mitochondrial large protein complex that contains, at least, MIC60, DGS1, TOM40, TOM20 proteins, and petC/RISP. The N-terminus is blocked. As to expression, expressed in roots, flowers, young cotyledons and leaves.

The protein resides in the mitochondrion outer membrane. Central component of the receptor complex responsible for the recognition and translocation of cytosolically synthesized mitochondrial preproteins. Together with TOM22 functions as the transit peptide receptor at the surface of the mitochondrion outer membrane and facilitates the movement of preproteins into the translocation pore. The chain is Mitochondrial import receptor subunit TOM20-3 from Arabidopsis thaliana (Mouse-ear cress).